The primary structure comprises 1024 residues: Multidrug resistance protein MdtC (1024 aa).

Helical transmembrane passes span Phe-3–Leu-23, Glu-333–Leu-353, Leu-360–Cys-380, Leu-387–Leu-407, Val-431–Met-451, Phe-463–Pro-483, Trp-528–Pro-548, Leu-853–Ser-873, Val-875–Leu-895, Leu-897–Val-917, Pro-953–Gly-973, and Ile-984–Val-1004.

This sequence belongs to the resistance-nodulation-cell division (RND) (TC 2.A.6) family. MdtC subfamily. In terms of assembly, part of a tripartite efflux system composed of MdtA, MdtB and MdtC. MdtC forms a heteromultimer with MdtB.

It localises to the cell inner membrane. This Erwinia amylovora (strain ATCC 49946 / CCPPB 0273 / Ea273 / 27-3) protein is Multidrug resistance protein MdtC.